Here is a 1416-residue protein sequence, read N- to C-terminus: DNA-directed RNA polymerase subunit beta' (1416 aa).

C60, C62, C75, and C78 together coordinate Zn(2+). Mg(2+) contacts are provided by D449, D451, and D453. Positions 781, 855, 862, and 865 each coordinate Zn(2+).

Belongs to the RNA polymerase beta' chain family. The RNAP catalytic core consists of 2 alpha, 1 beta, 1 beta' and 1 omega subunit. When a sigma factor is associated with the core the holoenzyme is formed, which can initiate transcription. Mg(2+) serves as cofactor. The cofactor is Zn(2+).

The catalysed reaction is RNA(n) + a ribonucleoside 5'-triphosphate = RNA(n+1) + diphosphate. In terms of biological role, DNA-dependent RNA polymerase catalyzes the transcription of DNA into RNA using the four ribonucleoside triphosphates as substrates. This chain is DNA-directed RNA polymerase subunit beta', found in Treponema pallidum (strain Nichols).